Here is a 645-residue protein sequence, read N- to C-terminus: 1-deoxy-D-xylulose-5-phosphate synthase 2 (645 aa).

Residues His79 and 120–122 each bind thiamine diphosphate; that span reads GHS. Residue Asp151 participates in Mg(2+) binding. Residues 152-153, Asn180, Tyr291, and Glu373 each bind thiamine diphosphate; that span reads GS. Asn180 serves as a coordination point for Mg(2+).

The protein belongs to the transketolase family. DXPS subfamily. As to quaternary structure, homodimer. Mg(2+) serves as cofactor. The cofactor is thiamine diphosphate.

The catalysed reaction is D-glyceraldehyde 3-phosphate + pyruvate + H(+) = 1-deoxy-D-xylulose 5-phosphate + CO2. Its pathway is metabolic intermediate biosynthesis; 1-deoxy-D-xylulose 5-phosphate biosynthesis; 1-deoxy-D-xylulose 5-phosphate from D-glyceraldehyde 3-phosphate and pyruvate: step 1/1. Its function is as follows. Catalyzes the acyloin condensation reaction between C atoms 2 and 3 of pyruvate and glyceraldehyde 3-phosphate to yield 1-deoxy-D-xylulose-5-phosphate (DXP). The polypeptide is 1-deoxy-D-xylulose-5-phosphate synthase 2 (Rhodospirillum rubrum (strain ATCC 11170 / ATH 1.1.1 / DSM 467 / LMG 4362 / NCIMB 8255 / S1)).